A 149-amino-acid chain; its full sequence is Alpha-crystallin A chain (149 aa).

The sHSP domain maps to Leu41 to Pro149. 4 residues coordinate Zn(2+): His89, Glu91, His96, and His143.

The protein belongs to the small heat shock protein (HSP20) family. Heteropolymer composed of three CRYAA and one CRYAB subunits. Inter-subunit bridging via zinc ions enhances stability, which is crucial as there is no protein turn over in the lens. Can also form homodimers and homotetramers (dimers of dimers) which serve as the building blocks of homooligomers. Within homooligomers, the zinc-binding motif is created from residues of 3 different molecules. His-89 and Glu-91 from one molecule are ligands of the zinc ion, and His-96 and His-143 residues from additional molecules complete the site with tetrahedral coordination geometry.

The protein localises to the cytoplasm. It localises to the nucleus. Its function is as follows. Contributes to the transparency and refractive index of the lens. May act as a chaperone, preventing aggregation of various proteins under a wide range of stress conditions. The protein is Alpha-crystallin A chain (CRYAA) of Anas platyrhynchos (Mallard).